The following is a 289-amino-acid chain: Glycine--tRNA ligase alpha subunit (289 aa).

Belongs to the class-II aminoacyl-tRNA synthetase family. In terms of assembly, tetramer of two alpha and two beta subunits.

The protein localises to the cytoplasm. It carries out the reaction tRNA(Gly) + glycine + ATP = glycyl-tRNA(Gly) + AMP + diphosphate. This Rickettsia typhi (strain ATCC VR-144 / Wilmington) protein is Glycine--tRNA ligase alpha subunit.